The sequence spans 297 residues: Formylmethanofuran--tetrahydromethanopterin formyltransferase (297 aa).

It belongs to the FTR family. In terms of assembly, homotetramer.

It is found in the cytoplasm. The enzyme catalyses N-formylmethanofuran + 5,6,7,8-tetrahydromethanopterin + H(+) = N(5)-formyl-5,6,7,8-tetrahydromethanopterin + methanofuran. Its pathway is one-carbon metabolism; methanogenesis from CO(2); 5,10-methenyl-5,6,7,8-tetrahydromethanopterin from CO(2): step 2/3. Functionally, catalyzes the reversible transfer of a formyl group from formylmethanofuran (formyl-MFR) to tetrahydromethanopterin (H(4)MPT) to produce 5-formyl tetrahydromethanopterin (5-formyl-H(4)MPT) and methanofuran (MFR). The protein is Formylmethanofuran--tetrahydromethanopterin formyltransferase of Methanococcoides burtonii (strain DSM 6242 / NBRC 107633 / OCM 468 / ACE-M).